The chain runs to 276 residues: F-actin-capping protein subunit alpha (276 aa).

This sequence belongs to the F-actin-capping protein alpha subunit family. Heterodimer of an alpha and a beta subunit.

It localises to the cytoplasm. The protein resides in the cytoskeleton. F-actin-capping proteins bind in a Ca(2+)-independent manner to the fast growing ends of actin filaments (barbed end) thereby blocking the exchange of subunits at these ends. Unlike other capping proteins (such as gelsolin and severin), these proteins do not sever actin filaments. The chain is F-actin-capping protein subunit alpha (cap1) from Aspergillus fumigatus (strain ATCC MYA-4609 / CBS 101355 / FGSC A1100 / Af293) (Neosartorya fumigata).